The chain runs to 507 residues: Maturase K (507 aa).

This sequence belongs to the intron maturase 2 family. MatK subfamily.

The protein localises to the plastid. The protein resides in the chloroplast. Its function is as follows. Usually encoded in the trnK tRNA gene intron. Probably assists in splicing its own and other chloroplast group II introns. The chain is Maturase K from Kalmia procumbens (Alpine azalea).